We begin with the raw amino-acid sequence, 583 residues long: Sensor protein SrrB (583 aa).

Over 1–11 (MMSRLNSVVIK) the chain is Cytoplasmic. The helical transmembrane segment at 12–32 (LWLTIILIVTTVLILLSIALI) threads the bilayer. Residues 33–174 (TFMQYYFTQE…SIEDTNNAIT (142 aa)) are Extracellular-facing. A helical transmembrane segment spans residues 175-195 (IITIITAVIFLTITTVFAFFL). Topologically, residues 196–583 (SSRITKPLRR…TFIIKLPKPE (388 aa)) are cytoplasmic. In terms of domain architecture, HAMP spans 197–249 (SRITKPLRRLRDQATRVSEGDYSYKPSVTTKDEIGQLSQAFNQMSTEIEEHVD). A Histidine kinase domain is found at 366–583 (NVSHELRTPI…TFIIKLPKPE (218 aa)). Position 369 is a phosphohistidine; by autocatalysis (His-369).

Its subcellular location is the cell membrane. The enzyme catalyses ATP + protein L-histidine = ADP + protein N-phospho-L-histidine.. Functionally, member of the two-component regulatory system SrrA/SrrB, which is involved in the global regulation of staphylococcal virulence factors in response to environmental oxygen levels as well as biofilm formation. Also plays an essential role in host-derived nitric oxide resistance by regulating hmp/flavohemoglobin, an enzyme that detoxifies nitric oxide by converting it to nitrate. Functions as a sensor protein kinase which is autophosphorylated at a histidine residue and transfers its phosphate group to SrrA. In turn, SrrA binds to the upstream promoter regions of the target genes to positively and negatively regulate their expression. The sequence is that of Sensor protein SrrB (srrB) from Staphylococcus aureus (strain Mu50 / ATCC 700699).